We begin with the raw amino-acid sequence, 400 residues long: MQYTYQHIQDLVPGPTPQNFYGKIIFIKKKINQIVVLIKDETQSIYLRVIPKEDQELEFQLRQVVRVHRCKIQSILNSKEGIAQIGLFGCHLIAWSQSGKVDNPVIISSRSWTKSDEDSERLQTLRKLGKSRRKSGRKTSVDTMANKLIERREAMFADTFIKSLFNKIALSRKEHLSRNARELFYHRPGDIVETQNLLEIDDSWFNDENSEQFVQYVLNCTTCHVEYNHVEYAQNNIPTNCRFCQEAMESFHAAFRIRISIETYGVFLTIPLELIKTELDICEDWDSESNIVEEEEKVTRFKKNIQEKVRDASIVHIKGISSLLLIIMLNINSISLVNNITENKRILLQKSNVPSSLQLKILITPFVIVVVRFFGITWIYSGSSCIEEVLNLIDNCSRRR.

It belongs to the telombin family. As to expression, expressed in sperm and oocytes.

The protein resides in the nucleus. The protein localises to the nucleus envelope. It localises to the chromosome. It is found in the telomere. Its function is as follows. Telomeric DNA-binding protein, which binds to single-stranded C-rich repeat sequences, with high specificity to the 5'-GCCTAA-3' sequence. Repeat sequence binding can be at the 5' or 3' telomeric end. May have a role in protecting the 5' end of the C-rich strand of the telomere. Acts redundantly with pot-2 to negatively regulate telomerase-mediated telomere extension. Also regulates telomere length by the telomerase-independent telomere maintenance pathway called ALT (alternative lengthening of telomeres). Through sun-1, anchors telomeres to the nuclear envelope in embryos. This is Protection of telomeres homolog 1 from Caenorhabditis elegans.